The following is a 650-amino-acid chain: Chaperone protein DnaK (650 aa).

At Thr-200 the chain carries Phosphothreonine; by autocatalysis. Positions 613 to 634 (QAGAAGAAGAAAAEGAAQGGAQ) are enriched in low complexity. The tract at residues 613–637 (QAGAAGAAGAAAAEGAAQGGAQTAD) is disordered.

The protein belongs to the heat shock protein 70 family.

Functionally, acts as a chaperone. The protein is Chaperone protein DnaK of Burkholderia thailandensis (strain ATCC 700388 / DSM 13276 / CCUG 48851 / CIP 106301 / E264).